We begin with the raw amino-acid sequence, 254 residues long: MEIDLNADLGEGCGSDEALLDLVTSANIACGWHAGGAQAMRDCVRWAVEKGVSIGAHPSFHDPENFGRKEMDLPASEIYAGVLYQLGALSAFAQAEGGRIAHVKPHGALYNQAAREPEIADAVVSAIHDFDPSLAVFGLAKSGFVDAARQAGLVAVEEVFADRGYRADGSLVPRSQPGALVDDENEMLARTLEMVRGQRVRAVTGEWVPLNAQTVCLHGDGPHALAFAKRIRDALEAAGIDVHAPGALHAGERA.

The protein belongs to the LamB/PxpA family. In terms of assembly, forms a complex composed of PxpA, PxpB and PxpC.

It carries out the reaction 5-oxo-L-proline + ATP + 2 H2O = L-glutamate + ADP + phosphate + H(+). Its function is as follows. Catalyzes the cleavage of 5-oxoproline to form L-glutamate coupled to the hydrolysis of ATP to ADP and inorganic phosphate. This is 5-oxoprolinase subunit A 1 from Burkholderia pseudomallei (strain K96243).